The sequence spans 79 residues: Small ribosomal subunit protein bS18 (79 aa).

This sequence belongs to the bacterial ribosomal protein bS18 family. Part of the 30S ribosomal subunit. Forms a tight heterodimer with protein bS6.

Its function is as follows. Binds as a heterodimer with protein bS6 to the central domain of the 16S rRNA, where it helps stabilize the platform of the 30S subunit. This Bacillus subtilis (strain 168) protein is Small ribosomal subunit protein bS18 (rpsR).